The following is a 387-amino-acid chain: Eukaryotic translation initiation factor 3 subunit M (387 aa).

One can recognise a PCI domain in the interval 181–340 (LSSKVMIELL…RKVHISSTMH (160 aa)).

It belongs to the eIF-3 subunit M family. As to quaternary structure, component of the eukaryotic translation initiation factor 3 (eIF-3) complex. The eIF-3 complex interacts with pix.

The protein localises to the cytoplasm. It localises to the golgi apparatus. Component of the eukaryotic translation initiation factor 3 (eIF-3) complex, which is involved in protein synthesis of a specialized repertoire of mRNAs and, together with other initiation factors, stimulates binding of mRNA and methionyl-tRNAi to the 40S ribosome. The eIF-3 complex specifically targets and initiates translation of a subset of mRNAs involved in cell proliferation. The chain is Eukaryotic translation initiation factor 3 subunit M from Drosophila ananassae (Fruit fly).